The chain runs to 1146 residues: Transcription-repair-coupling factor (1146 aa).

The Helicase ATP-binding domain occupies 617 to 778 (DMCQPKAMDR…MNGIRDLSII (162 aa)). 630-637 (GDVGFGKT) contributes to the ATP binding site. Residues 731 to 734 (DEEH) carry the DEEH box motif. One can recognise a Helicase C-terminal domain in the interval 800–953 (VREAILREIL…GFILATHDLE (154 aa)).

The protein in the N-terminal section; belongs to the UvrB family. This sequence in the C-terminal section; belongs to the helicase family. RecG subfamily.

The protein resides in the cytoplasm. Couples transcription and DNA repair by recognizing RNA polymerase (RNAP) stalled at DNA lesions. Mediates ATP-dependent release of RNAP and its truncated transcript from the DNA, and recruitment of nucleotide excision repair machinery to the damaged site. The protein is Transcription-repair-coupling factor of Haemophilus influenzae (strain ATCC 51907 / DSM 11121 / KW20 / Rd).